A 222-amino-acid chain; its full sequence is Putative N-acetylmannosamine-6-phosphate 2-epimerase (222 aa).

This sequence belongs to the NanE family.

The enzyme catalyses an N-acyl-D-glucosamine 6-phosphate = an N-acyl-D-mannosamine 6-phosphate. The protein operates within amino-sugar metabolism; N-acetylneuraminate degradation; D-fructose 6-phosphate from N-acetylneuraminate: step 3/5. Its function is as follows. Converts N-acetylmannosamine-6-phosphate (ManNAc-6-P) to N-acetylglucosamine-6-phosphate (GlcNAc-6-P). In Staphylococcus aureus (strain Mu3 / ATCC 700698), this protein is Putative N-acetylmannosamine-6-phosphate 2-epimerase.